We begin with the raw amino-acid sequence, 166 residues long: Peptidyl-prolyl cis-trans isomerase-like 1 (166 aa).

The PPIase cyclophilin-type domain occupies 10–164; it reads QPPNVYLETS…DDVKIIKAYP (155 aa). Residues 54-65, 70-71, 99-104, 109-113, Thr119, and Lys125 each bind cyclosporin A; these read HRIIKDFMIQGG, TG, AMANAG, and GSQFF. Ser149 is subject to Phosphoserine.

This sequence belongs to the cyclophilin-type PPIase family. PPIL1 subfamily. In terms of assembly, identified in the spliceosome C complex. Interacts with SNW1/SKIP. Interacts with CDC40/PRP17; this interaction leads to CDC40 isomerization. Interacts with RBM22.

It is found in the nucleus. It catalyses the reaction [protein]-peptidylproline (omega=180) = [protein]-peptidylproline (omega=0). With respect to regulation, inhibited by Cyclosporin A. In terms of biological role, involved in pre-mRNA splicing as component of the spliceosome. PPIases accelerate the folding of proteins. It catalyzes the cis-trans isomerization of proline imidic peptide bonds in oligopeptides. Catalyzes prolyl peptide bond isomerization in CDC40/PRP17. Plays an important role in embryonic brain development; this function is independent of its isomerase activity. This is Peptidyl-prolyl cis-trans isomerase-like 1 (PPIL1) from Bos taurus (Bovine).